Here is a 594-residue protein sequence, read N- to C-terminus: Alanine--tRNA ligase (594 aa).

The Zn(2+) site is built by histidine 456, histidine 460, cysteine 558, and histidine 562.

It belongs to the class-II aminoacyl-tRNA synthetase family. Requires Zn(2+) as cofactor.

Its subcellular location is the cytoplasm. It catalyses the reaction tRNA(Ala) + L-alanine + ATP = L-alanyl-tRNA(Ala) + AMP + diphosphate. Functionally, catalyzes the attachment of alanine to tRNA(Ala) in a two-step reaction: alanine is first activated by ATP to form Ala-AMP and then transferred to the acceptor end of tRNA(Ala). Also edits incorrectly charged Ser-tRNA(Ala) and Gly-tRNA(Ala) via its editing domain. The protein is Alanine--tRNA ligase (alaS) of Borrelia garinii subsp. bavariensis (strain ATCC BAA-2496 / DSM 23469 / PBi) (Borreliella bavariensis).